A 769-amino-acid polypeptide reads, in one-letter code: DNA helicase/primase complex-associated protein (769 aa).

Belongs to the herpesviridae HEPA family. As to quaternary structure, associates with the primase and the helicase to form the helicase-primase complex. Interacts with the origin-binding protein. Interacts with the polymerase catalytic subunit.

It localises to the host nucleus. Functionally, component of the helicase/primase complex. Unwinds the DNA at the replication forks and generates single-stranded DNA for both leading and lagging strand synthesis. The primase synthesizes short RNA primers on the lagging strand that the polymerase presumably elongates using dNTPs. The primase-associated factor has no known catalytic activity in the complex and may serve to facilitate the formation of the replisome by directly interacting with the origin-binding protein and the polymerase. This chain is DNA helicase/primase complex-associated protein (MDV020), found in Gallus gallus (Chicken).